We begin with the raw amino-acid sequence, 236 residues long: Uridylate kinase (236 aa).

11–14 (KFSG) serves as a coordination point for ATP. Residue G53 coordinates UMP. G54 and R58 together coordinate ATP. UMP-binding positions include D73 and 134–141 (TGSPFFTT). ATP-binding residues include T161, Y167, and D170.

The protein belongs to the UMP kinase family. In terms of assembly, homohexamer.

It is found in the cytoplasm. It catalyses the reaction UMP + ATP = UDP + ADP. It participates in pyrimidine metabolism; CTP biosynthesis via de novo pathway; UDP from UMP (UMPK route): step 1/1. Its activity is regulated as follows. Inhibited by UTP. Its function is as follows. Catalyzes the reversible phosphorylation of UMP to UDP. This chain is Uridylate kinase, found in Hydrogenovibrio crunogenus (strain DSM 25203 / XCL-2) (Thiomicrospira crunogena).